The following is a 1203-amino-acid chain: Transmembrane channel-like protein 2 (1203 aa).

Disordered stretches follow at residues 1–39 and 64–90; these read MPKS…IDSR and PHTR…EASK. Positions 73 to 86 are enriched in acidic residues; sequence FDDDDDEFDEEDDK. Residues 191–213 form a helical membrane-spanning segment; it reads VLGVNITITFIMCMFVVIPEWLA. Residue asparagine 225 is glycosylated (N-linked (GlcNAc...) asparagine). The next 6 helical transmembrane spans lie at 276-298, 369-391, 406-428, 441-463, 665-687, and 714-736; these read YRVP…FIIL, FVAR…WAIM, ATAI…LGKI, LGRV…MLQL, MIWL…LIIL, and FFFA…VIAS. Asparagine 748 is a glycosylation site (N-linked (GlcNAc...) asparagine). The helical transmembrane segment at 780–802 threads the bilayer; that stretch reads IIIPVLVLLSLVIYFLIAMVTGL. Disordered stretches follow at residues 826–908, 927–1039, 1059–1087, and 1112–1203; these read ELAG…SLPP, KYGR…IEKQ, ATVE…HEPL, and NDET…SDND. A compositionally biased stretch (polar residues) spans 865-874; it reads NRSTAKSVSG. Residues 898–908 are compositionally biased toward low complexity; it reads DSESTTSSLPP. Residues 927-945 are compositionally biased toward basic and acidic residues; sequence KYGRHDDIEMEEGGGRLRE. Low complexity-rich tracts occupy residues 973 to 997 and 1022 to 1035; these read QSFD…PSNS and SASS…PSSS. Polar residues predominate over residues 1061–1076; sequence VENSSQDPTRPPSTDD. Composition is skewed to basic and acidic residues over residues 1133 to 1147 and 1172 to 1203; these read SPRE…KDQQ and PPSE…SDND.

It belongs to the TMC family.

It is found in the membrane. Its function is as follows. Probable ion channel. The polypeptide is Transmembrane channel-like protein 2 (tmc-2) (Caenorhabditis elegans).